A 474-amino-acid polypeptide reads, in one-letter code: Glutamyl-tRNA(Gln) amidotransferase subunit A (474 aa).

Active-site charge relay system residues include Lys-76 and Ser-151. Ser-175 functions as the Acyl-ester intermediate in the catalytic mechanism.

Belongs to the amidase family. GatA subfamily. In terms of assembly, heterotrimer of A, B and C subunits.

It carries out the reaction L-glutamyl-tRNA(Gln) + L-glutamine + ATP + H2O = L-glutaminyl-tRNA(Gln) + L-glutamate + ADP + phosphate + H(+). Allows the formation of correctly charged Gln-tRNA(Gln) through the transamidation of misacylated Glu-tRNA(Gln) in organisms which lack glutaminyl-tRNA synthetase. The reaction takes place in the presence of glutamine and ATP through an activated gamma-phospho-Glu-tRNA(Gln). The protein is Glutamyl-tRNA(Gln) amidotransferase subunit A of Chlorobium limicola (strain DSM 245 / NBRC 103803 / 6330).